Here is a 60-residue protein sequence, read N- to C-terminus: Large ribosomal subunit protein bL32 (60 aa).

Residues methionine 1–lysine 23 are disordered.

It belongs to the bacterial ribosomal protein bL32 family.

The protein is Large ribosomal subunit protein bL32 of Wolbachia sp. subsp. Brugia malayi (strain TRS).